The following is a 347-amino-acid chain: Melanoma-associated antigen B10 (347 aa).

Residues methionine 1–alanine 18 show a composition bias toward basic residues. Disordered regions lie at residues methionine 1 to glycine 20 and glycine 56 to glutamate 92. A compositionally biased stretch (low complexity) spans alanine 67–serine 78. Residues arginine 81 to glutamate 92 show a composition bias toward basic and acidic residues. Positions valine 111–alanine 310 constitute an MAGE domain. Residues valine 328–glutamine 347 are disordered.

In Homo sapiens (Human), this protein is Melanoma-associated antigen B10 (MAGEB10).